The following is a 287-amino-acid chain: MAGGREIKTKIKSVQNTRKVTRALEMVSASKIRKAQERMKTSRPYAQAMKQVIGHLAQASTDYQHPFLVEREQVKRVGYIVISSDRGLAGGLNNNLFRKMLGEVRPWQDKGAEIDVVTIGQKASAFFRRIKVNMVGSVTHLGDSPHIEQLVGVIKVMLDAFTEGKVDRVYLVYNRFVNTMTQKASFEQLLPLPAAEHKVAHHDWDYLYEPDAATVLEHVMTRYIESLVYQAVLENVASEHAARMVAMKAASDNANKMIGTLQLVYNKARQAAITQEISEIVSGAAAV.

The protein belongs to the ATPase gamma chain family. As to quaternary structure, F-type ATPases have 2 components, CF(1) - the catalytic core - and CF(0) - the membrane proton channel. CF(1) has five subunits: alpha(3), beta(3), gamma(1), delta(1), epsilon(1). CF(0) has three main subunits: a, b and c.

It is found in the cell inner membrane. In terms of biological role, produces ATP from ADP in the presence of a proton gradient across the membrane. The gamma chain is believed to be important in regulating ATPase activity and the flow of protons through the CF(0) complex. The sequence is that of ATP synthase gamma chain from Xanthomonas campestris pv. campestris (strain B100).